Consider the following 184-residue polypeptide: Adenine phosphoribosyltransferase (184 aa).

It belongs to the purine/pyrimidine phosphoribosyltransferase family. In terms of assembly, homodimer.

It localises to the cytoplasm. It catalyses the reaction AMP + diphosphate = 5-phospho-alpha-D-ribose 1-diphosphate + adenine. It participates in purine metabolism; AMP biosynthesis via salvage pathway; AMP from adenine: step 1/1. Catalyzes a salvage reaction resulting in the formation of AMP, that is energically less costly than de novo synthesis. The protein is Adenine phosphoribosyltransferase of Parafrankia sp. (strain EAN1pec).